The primary structure comprises 1055 residues: Type I restriction enzyme HindI endonuclease subunit (1055 aa).

The Helicase ATP-binding domain maps to 287–468 (TSEKGDRRIG…QDVFGRYVSI (182 aa)).

This sequence belongs to the HsdR family. In terms of assembly, the type I restriction/modification system is composed of three polypeptides R, M and S; the restriction enzyme has stoichiometry R(2)M(2)S(1) while the methyltransferase is M(2)S(1).

The catalysed reaction is Endonucleolytic cleavage of DNA to give random double-stranded fragments with terminal 5'-phosphates, ATP is simultaneously hydrolyzed.. The restriction (R) subunit of a type I restriction enzyme that recognizes 5'-RAACN(5)TAG-3' and cleaves a random distance away. Subunit R is required for both nuclease and ATPase activities, but not for modification. After locating a non-methylated recognition site, the enzyme complex serves as a molecular motor that translocates DNA in an ATP-dependent manner until a collision occurs that triggers cleavage. The polypeptide is Type I restriction enzyme HindI endonuclease subunit (Haemophilus influenzae (strain ATCC 51907 / DSM 11121 / KW20 / Rd)).